Here is a 300-residue protein sequence, read N- to C-terminus: Acetaldehyde dehydrogenase 1 (300 aa).

11 to 14 (SGNI) serves as a coordination point for NAD(+). Cysteine 126 functions as the Acyl-thioester intermediate in the catalytic mechanism. Residues 157 to 165 (SAGPGTRAN) and asparagine 276 each bind NAD(+).

Belongs to the acetaldehyde dehydrogenase family.

The enzyme catalyses acetaldehyde + NAD(+) + CoA = acetyl-CoA + NADH + H(+). In Rhodococcus erythropolis (strain PR4 / NBRC 100887), this protein is Acetaldehyde dehydrogenase 1.